A 109-amino-acid chain; its full sequence is ATP synthase subunit c (109 aa).

Transmembrane regions (helical) follow at residues 42-62 (YIGT…QGFS) and 88-108 (LALA…IIFV).

Belongs to the ATPase C chain family. As to quaternary structure, F-type ATPases have 2 components, F(1) - the catalytic core - and F(0) - the membrane proton channel. F(1) has five subunits: alpha(3), beta(3), gamma(1), delta(1), epsilon(1). F(0) has three main subunits: a(1), b(2) and c(10-14). The alpha and beta chains form an alternating ring which encloses part of the gamma chain. F(1) is attached to F(0) by a central stalk formed by the gamma and epsilon chains, while a peripheral stalk is formed by the delta and b chains.

It localises to the cell membrane. F(1)F(0) ATP synthase produces ATP from ADP in the presence of a proton or sodium gradient. F-type ATPases consist of two structural domains, F(1) containing the extramembraneous catalytic core and F(0) containing the membrane proton channel, linked together by a central stalk and a peripheral stalk. During catalysis, ATP synthesis in the catalytic domain of F(1) is coupled via a rotary mechanism of the central stalk subunits to proton translocation. In terms of biological role, key component of the F(0) channel; it plays a direct role in translocation across the membrane. A homomeric c-ring of between 10-14 subunits forms the central stalk rotor element with the F(1) delta and epsilon subunits. The sequence is that of ATP synthase subunit c from Ureaplasma urealyticum serovar 10 (strain ATCC 33699 / Western).